Reading from the N-terminus, the 190-residue chain is Ribosome-recycling factor (190 aa).

The protein belongs to the RRF family.

It localises to the cytoplasm. Its function is as follows. Responsible for the release of ribosomes from messenger RNA at the termination of protein biosynthesis. May increase the efficiency of translation by recycling ribosomes from one round of translation to another. The protein is Ribosome-recycling factor of Fusobacterium nucleatum subsp. nucleatum (strain ATCC 25586 / DSM 15643 / BCRC 10681 / CIP 101130 / JCM 8532 / KCTC 2640 / LMG 13131 / VPI 4355).